We begin with the raw amino-acid sequence, 142 residues long: Large ribosomal subunit protein uL13 (142 aa).

The protein belongs to the universal ribosomal protein uL13 family. As to quaternary structure, part of the 50S ribosomal subunit.

This protein is one of the early assembly proteins of the 50S ribosomal subunit, although it is not seen to bind rRNA by itself. It is important during the early stages of 50S assembly. The chain is Large ribosomal subunit protein uL13 from Pseudomonas entomophila (strain L48).